An 811-amino-acid chain; its full sequence is Ribonucleoside-diphosphate reductase large subunit (811 aa).

Substrate-binding positions include Thr-231, 246–247 (SC), Gly-277, 450–454 (NLCTE), and 636–640 (PTASS). Cys-247 and Cys-467 are disulfide-bonded. Asn-450 serves as the catalytic Proton acceptor. The active-site Cysteine radical intermediate is the Cys-452. Glu-454 serves as the catalytic Proton acceptor.

It belongs to the ribonucleoside diphosphate reductase large chain family. As to quaternary structure, heterotetramer composed of a homodimer of the large subunit (R1) and a homodimer of the small subunit (R2). Larger multisubunit protein complex are also active, composed of (R1)n(R2)n.

The catalysed reaction is a 2'-deoxyribonucleoside 5'-diphosphate + [thioredoxin]-disulfide + H2O = a ribonucleoside 5'-diphosphate + [thioredoxin]-dithiol. Ribonucleoside-diphosphate reductase holoenzyme provides the precursors necessary for viral DNA synthesis. Allows virus growth in non-dividing cells, as well as reactivation from latency in infected hosts. Catalyzes the biosynthesis of deoxyribonucleotides from the corresponding ribonucleotides. In Amazona oratrix (yellow-headed parrot), this protein is Ribonucleoside-diphosphate reductase large subunit.